A 484-amino-acid polypeptide reads, in one-letter code: Cysteine--tRNA ligase (484 aa).

Cysteine 29 lines the Zn(2+) pocket. The 'HIGH' region signature appears at 31 to 41; it reads PTVQSAPHIGH. Residues cysteine 219, histidine 244, and glutamate 248 each contribute to the Zn(2+) site. The 'KMSKS' region motif lies at 275 to 279; that stretch reads KMSKS. Lysine 278 is an ATP binding site.

Belongs to the class-I aminoacyl-tRNA synthetase family. Monomer. Requires Zn(2+) as cofactor.

Its subcellular location is the cytoplasm. The catalysed reaction is tRNA(Cys) + L-cysteine + ATP = L-cysteinyl-tRNA(Cys) + AMP + diphosphate. This is Cysteine--tRNA ligase from Clavibacter sepedonicus (Clavibacter michiganensis subsp. sepedonicus).